We begin with the raw amino-acid sequence, 492 residues long: Catalase isozyme 2 (492 aa).

The disordered stretch occupies residues 1–32 (MDPYKFRPSSSNDTPFWTTNAGDPVSNNNSSM). Positions 8–32 (PSSSNDTPFWTTNAGDPVSNNNSSM) are enriched in polar residues. Active-site residues include His-65 and Asn-138. Tyr-348 provides a ligand contact to heme.

Belongs to the catalase family. Homotetramer. Heme serves as cofactor. In terms of tissue distribution, abundant in hypocotyls and roots. Low levels are seen in the endosperms and cotyledons.

The protein resides in the peroxisome. It is found in the glyoxysome. It carries out the reaction 2 H2O2 = O2 + 2 H2O. Its function is as follows. Occurs in almost all aerobically respiring organisms and serves to protect cells from the toxic effects of hydrogen peroxide. This is Catalase isozyme 2 (CAT2) from Ricinus communis (Castor bean).